We begin with the raw amino-acid sequence, 1136 residues long: Rho GTPase-activating protein 45 (1136 aa).

2 disordered regions span residues 1–73 (MFSR…RHAS) and 91–110 (HRSP…GAGP). Serine 23, serine 25, serine 73, serine 93, and serine 99 each carry phosphoserine. The F-BAR domain occupies 269-539 (EEVDVLLQRC…SSKLYDPGQQ (271 aa)). 2 coiled-coil regions span residues 376–412 (EHEK…YVQR) and 440–499 (TATK…RQSD). Serine 569, serine 578, serine 592, and serine 619 each carry phosphoserine. A disordered region spans residues 583-662 (DVARPEAAGS…SSTEELVDPD (80 aa)). Positions 646–655 (TSSSGTMSST) are enriched in low complexity. Residues 702-747 (THRLRKLRTPAKCRECNSYVYFQGAECEECCLACHKKCLETLAIQC) form a Phorbol-ester/DAG-type zinc finger. Positions 761–974 (QDFSHAARSA…TLIVHYGLVF (214 aa)) constitute a Rho-GAP domain. Serine 949, serine 1027, serine 1030, and serine 1032 each carry phosphoserine. The segment at 1061-1136 (EASLEVASGS…SCRERQPEFV (76 aa)) is disordered. Over residues 1095 to 1109 (QQLSGFNTNQSNNVL) the composition is skewed to polar residues.

As to quaternary structure, HA-1 forms a complex with MHC class I HLA-A*0201. Expressed on cells of the hematopoietic lineage. Detected in dendritic cells and epidermal Langerhans cells. Expressed in peripheral blood mononuclear cells, in all leukemia/lymphoma cell lines. Detected also in some solid tumors and tissues such as cancerous and non-cancerous tissue.

The protein resides in the cytoplasm. Its subcellular location is the cell projection. The protein localises to the ruffle membrane. Its function is as follows. Contains a GTPase activator for the Rho-type GTPases (RhoGAP) domain that would be able to negatively regulate the actin cytoskeleton as well as cell spreading. However, also contains N-terminally a BAR-domin which is able to play an autoinhibitory effect on this RhoGAP activity. In terms of biological role, precursor of the histocompatibility antigen HA-1. More generally, minor histocompatibility antigens (mHags) refer to immunogenic peptide which, when complexed with MHC, can generate an immune response after recognition by specific T-cells. The peptides are derived from polymorphic intracellular proteins, which are cleaved by normal pathways of antigen processing. The binding of these peptides to MHC class I or class II molecules and its expression on the cell surface can stimulate T-cell responses and thereby trigger graft rejection or graft-versus-host disease (GVHD) after hematopoietic stem cell transplantation from HLA-identical sibling donor. GVHD is a frequent complication after bone marrow transplantation (BMT), due to mismatch of minor histocompatibility antigen in HLA-matched sibling marrow transplants. Specifically, mismatching for mHag HA-1 which is recognized as immunodominant, is shown to be associated with the development of severe GVHD after HLA-identical BMT. HA-1 is presented to the cell surface by MHC class I HLA-A*0201, but also by other HLA-A alleles. This complex specifically elicits donor-cytotoxic T-lymphocyte (CTL) reactivity against hematologic malignancies after treatment by HLA-identical allogenic BMT. It induces cell recognition and lysis by CTL. The polypeptide is Rho GTPase-activating protein 45 (Homo sapiens (Human)).